Consider the following 202-residue polypeptide: Probable septum site-determining protein MinC (202 aa).

It belongs to the MinC family. In terms of assembly, interacts with MinD and FtsZ.

Cell division inhibitor that blocks the formation of polar Z ring septums. Rapidly oscillates between the poles of the cell to destabilize FtsZ filaments that have formed before they mature into polar Z rings. Prevents FtsZ polymerization. In Sulfurihydrogenibium sp. (strain YO3AOP1), this protein is Probable septum site-determining protein MinC.